Here is a 151-residue protein sequence, read N- to C-terminus: 3-dehydroquinate dehydratase 1 (151 aa).

The Proton acceptor role is filled by Tyr-23. Positions 75, 81, and 88 each coordinate substrate. His-101 functions as the Proton donor in the catalytic mechanism. Substrate contacts are provided by residues 102–103 and Arg-112; that span reads LS.

It belongs to the type-II 3-dehydroquinase family. In terms of assembly, homododecamer.

The enzyme catalyses 3-dehydroquinate = 3-dehydroshikimate + H2O. The protein operates within metabolic intermediate biosynthesis; chorismate biosynthesis; chorismate from D-erythrose 4-phosphate and phosphoenolpyruvate: step 3/7. In terms of biological role, catalyzes a trans-dehydration via an enolate intermediate. This Pseudomonas putida (strain ATCC 47054 / DSM 6125 / CFBP 8728 / NCIMB 11950 / KT2440) protein is 3-dehydroquinate dehydratase 1 (aroQ1).